A 289-amino-acid polypeptide reads, in one-letter code: Pteridine reductase 1 (289 aa).

14 to 41 (GAAKRLGSSIAEALHAEGYTVCLHYHRS) lines the NADP(+) pocket. Ser-176 serves as a coordination point for substrate. Tyr-195 (proton acceptor) is an active-site residue. 195–199 (YTMAK) provides a ligand contact to NADP(+).

Belongs to the short-chain dehydrogenases/reductases (SDR) family. Homotetramer.

It carries out the reaction (6R)-L-erythro-5,6,7,8-tetrahydrobiopterin + 2 NADP(+) = L-erythro-biopterin + 2 NADPH + 2 H(+). Its pathway is cofactor biosynthesis; tetrahydrobiopterin biosynthesis; tetrahydrobiopterin from biopterin: step 1/1. Exhibits a NADPH-dependent biopterin reductase activity. Has good activity with folate and significant activity with dihydrofolate and dihydrobiopterin, but not with quinonoid dihydrobiopterin. Confers resistance to methotrexate (MTX). The polypeptide is Pteridine reductase 1 (PTR1) (Leishmania tarentolae (Sauroleishmania tarentolae)).